We begin with the raw amino-acid sequence, 690 residues long: Elongation factor G (690 aa).

One can recognise a tr-type G domain in the interval serine 8–asparagine 283. GTP contacts are provided by residues alanine 17–threonine 24, aspartate 81–histidine 85, and asparagine 135–aspartate 138.

This sequence belongs to the TRAFAC class translation factor GTPase superfamily. Classic translation factor GTPase family. EF-G/EF-2 subfamily.

It localises to the cytoplasm. Catalyzes the GTP-dependent ribosomal translocation step during translation elongation. During this step, the ribosome changes from the pre-translocational (PRE) to the post-translocational (POST) state as the newly formed A-site-bound peptidyl-tRNA and P-site-bound deacylated tRNA move to the P and E sites, respectively. Catalyzes the coordinated movement of the two tRNA molecules, the mRNA and conformational changes in the ribosome. This chain is Elongation factor G, found in Ehrlichia chaffeensis (strain ATCC CRL-10679 / Arkansas).